Here is a 167-residue protein sequence, read N- to C-terminus: Glucose-6-phosphate isomerase (167 aa).

The Proton donor role is filled by Glu-54. His-85 is a catalytic residue.

Belongs to the GPI family.

It is found in the cytoplasm. It catalyses the reaction alpha-D-glucose 6-phosphate = beta-D-fructose 6-phosphate. It functions in the pathway carbohydrate biosynthesis; gluconeogenesis. Its pathway is carbohydrate degradation; glycolysis; D-glyceraldehyde 3-phosphate and glycerone phosphate from D-glucose: step 2/4. Its function is as follows. Catalyzes the reversible isomerization of glucose-6-phosphate to fructose-6-phosphate. The protein is Glucose-6-phosphate isomerase of Klebsiella oxytoca.